The following is a 120-amino-acid chain: NAD(P)H-quinone oxidoreductase subunit 3, chloroplastic (120 aa).

3 helical membrane passes run 14 to 34, 64 to 84, and 88 to 108; these read LIISILIPILAFLISGILAPI, MFALVFVVFDVETVFLYPWAM, and VLGVSVFIEALIFVLILIVGS.

This sequence belongs to the complex I subunit 3 family. As to quaternary structure, NDH is composed of at least 16 different subunits, 5 of which are encoded in the nucleus.

Its subcellular location is the plastid. The protein localises to the chloroplast thylakoid membrane. The enzyme catalyses a plastoquinone + NADH + (n+1) H(+)(in) = a plastoquinol + NAD(+) + n H(+)(out). It catalyses the reaction a plastoquinone + NADPH + (n+1) H(+)(in) = a plastoquinol + NADP(+) + n H(+)(out). NDH shuttles electrons from NAD(P)H:plastoquinone, via FMN and iron-sulfur (Fe-S) centers, to quinones in the photosynthetic chain and possibly in a chloroplast respiratory chain. The immediate electron acceptor for the enzyme in this species is believed to be plastoquinone. Couples the redox reaction to proton translocation, and thus conserves the redox energy in a proton gradient. The chain is NAD(P)H-quinone oxidoreductase subunit 3, chloroplastic from Cicer arietinum (Chickpea).